A 24-amino-acid polypeptide reads, in one-letter code: Protein YsdE (24 aa).

This chain is Protein YsdE, found in Escherichia coli (strain K12).